A 194-amino-acid polypeptide reads, in one-letter code: Lymphocyte antigen 6 complex locus protein G5b (194 aa).

An N-terminal signal peptide occupies residues 1–18 (MRACVLVHVLTMVGFALG). In terms of domain architecture, UPAR/Ly6 spans 26–118 (RTCHLCFLED…SAQHQSTLPG (93 aa)). 5 disulfides stabilise this stretch: C28/C55, C31/C40, C47/C73, C81/C98, and C99/C104. N182 carries an N-linked (GlcNAc...) asparagine glycan.

Post-translationally, N-glycosylated.

It localises to the secreted. The protein is Lymphocyte antigen 6 complex locus protein G5b (Ly6g5b) of Rattus norvegicus (Rat).